We begin with the raw amino-acid sequence, 364 residues long: Fructose-bisphosphate aldolase A (364 aa).

Residue Y5 is modified to Phosphotyrosine. T9 carries the post-translational modification Phosphothreonine. Phosphoserine is present on residues S36 and S39. K42 is subject to N6-acetyllysine; alternate. Residue K42 forms a Glycyl lysine isopeptide (Lys-Gly) (interchain with G-Cter in SUMO1); alternate linkage. K42 is covalently cross-linked (Glycyl lysine isopeptide (Lys-Gly) (interchain with G-Cter in SUMO2); alternate). R43 provides a ligand contact to beta-D-fructose 1,6-bisphosphate. S46 carries the post-translational modification Phosphoserine. K99 carries the N6-(2-hydroxyisobutyryl)lysine modification. K108 bears the N6-acetyllysine mark. An N6-acetyllysine; alternate modification is found at K111. Residue K111 is modified to N6-malonyllysine; alternate. The residue at position 132 (S132) is a Phosphoserine. Residue K147 is modified to N6-(2-hydroxyisobutyryl)lysine. The Proton acceptor role is filled by E188. Residue K230 is the Schiff-base intermediate with dihydroxyacetone-P of the active site. Phosphoserine is present on S272. Residues 272 to 274 (SGG), S301, and R304 contribute to the beta-D-fructose 1,6-bisphosphate site. An N6-malonyllysine modification is found at K312. K330 bears the N6-acetyllysine mark.

It belongs to the class I fructose-bisphosphate aldolase family. In terms of assembly, homotetramer. Interacts with SNX9 and WAS. Interacts with FBP2; the interaction blocks FBP2 inhibition by physiological concentrations of AMP and reduces inhibition by Ca(2+).

The protein localises to the cytoplasm. It localises to the myofibril. The protein resides in the sarcomere. It is found in the i band. Its subcellular location is the m line. The catalysed reaction is beta-D-fructose 1,6-bisphosphate = D-glyceraldehyde 3-phosphate + dihydroxyacetone phosphate. The protein operates within carbohydrate degradation; glycolysis; D-glyceraldehyde 3-phosphate and glycerone phosphate from D-glucose: step 4/4. Functionally, catalyzes the reversible conversion of beta-D-fructose 1,6-bisphosphate (FBP) into two triose phosphate and plays a key role in glycolysis and gluconeogenesis. In addition, may also function as scaffolding protein. The protein is Fructose-bisphosphate aldolase A of Homo sapiens (Human).